Reading from the N-terminus, the 186-residue chain is Mitochondrial import inner membrane translocase subunit Tim22 (186 aa).

Disulfide bonds link cysteine 61-cysteine 133 and cysteine 152-cysteine 171. Helical transmembrane passes span 66–86 (ALAC…TAGI), 117–135 (YAKN…ECLV), and 162–182 (AGLK…AVID).

Belongs to the Tim17/Tim22/Tim23 family. As to quaternary structure, core component of the TIM22 complex.

The protein localises to the mitochondrion inner membrane. Functionally, essential core component of the TIM22 complex, a complex that mediates the import and insertion of multi-pass transmembrane proteins into the mitochondrial inner membrane. In the TIM22 complex, it constitutes the voltage-activated and signal-gated channel. Forms a twin-pore translocase that uses the membrane potential as external driving force in 2 voltage-dependent steps. This is Mitochondrial import inner membrane translocase subunit Tim22 (timm22) from Xenopus tropicalis (Western clawed frog).